A 623-amino-acid chain; its full sequence is Phosphoglucomutase, chloroplastic (623 aa).

Residues 1–63 (MTSTYTRFDT…SSSSSSVVAG (63 aa)) constitute a chloroplast transit peptide. Alpha-D-glucose 1,6-bisphosphate-binding residues include Arg-88 and Ser-181. The Phosphoserine intermediate role is filled by Ser-181. Positions 181, 346, 348, and 350 each coordinate Mg(2+). Ser-181 carries the post-translational modification Phosphoserine. Residues Asp-350, Arg-351, Thr-414, Glu-433, Ser-435, and Lys-446 each contribute to the alpha-D-glucose 1,6-bisphosphate site.

Belongs to the phosphohexose mutase family. As to quaternary structure, monomer. The cofactor is Mg(2+). As to expression, expressed in flowers, siliques and germinating seeds.

The protein resides in the plastid. The protein localises to the chloroplast. It catalyses the reaction alpha-D-glucose 1-phosphate = alpha-D-glucose 6-phosphate. The catalysed reaction is O-phospho-L-seryl-[protein] + alpha-D-glucose 1-phosphate = alpha-D-glucose 1,6-bisphosphate + L-seryl-[protein]. It carries out the reaction alpha-D-glucose 1,6-bisphosphate + L-seryl-[protein] = O-phospho-L-seryl-[protein] + alpha-D-glucose 6-phosphate. With respect to regulation, inhibited by the Calvin cycle intermediates fructose-1,6-bisphosphate and ribulose-1,5-bisphosphate. In terms of biological role, catalyzes the reversible isomerization of alpha-D-glucose 1-phosphate to alpha-D-glucose 6-phosphate. The mechanism proceeds via the intermediate compound alpha-D-glucose 1,6-bisphosphate. This enzyme participates in both the breakdown and synthesis of glucose. Factor that affects seed oil content. Accumulated starch in young embryos may play an important role in providing carbon resources for seed storage lipid biosynthesis in oilseed plants. Promotes gravitropic responses, negative in shoots but positive in roots, by facilitating starch granules (statoliths) formation in hypocotyls and roots columella. The protein is Phosphoglucomutase, chloroplastic of Arabidopsis thaliana (Mouse-ear cress).